Consider the following 354-residue polypeptide: Cellular communication network factor 6 (354 aa).

The signal sequence occupies residues 1–23 (MQGLLFSTLLLAGLAQFCCRVQG). Residues 44-117 (RKQFCHWPCK…RYETGVCAYL (74 aa)) enclose the IGFBP N-terminal domain. Cystine bridges form between Cys-48-Cys-72, Cys-52-Cys-74, Cys-54-Cys-75, Cys-61-Cys-78, Cys-86-Cys-100, and Cys-92-Cys-114. N-linked (GlcNAc...) asparagine glycosylation occurs at Asn-178. One can recognise a TSP type-1 domain in the interval 208 to 253 (KCLVQATKWTPCSRTCGMGISNRVTNENSNCEMRKEKRLCYIQPCD). Intrachain disulfides connect Cys-268-Cys-305, Cys-285-Cys-319, Cys-296-Cys-335, Cys-299-Cys-337, and Cys-304-Cys-341. The CTCK domain maps to 268-342 (CQPTFQLSKA…TSCVCQRNCR (75 aa)). Asn-308 carries an N-linked (GlcNAc...) asparagine glycan.

This sequence belongs to the CCN family. As to expression, predominant expression in adult kidney and testis and fetal kidney. Weaker expression found in placenta, ovary, prostate and small intestine. Also expressed in skeletally-derived cells such as synoviocytes and articular cartilage chondrocytes.

The protein resides in the secreted. It localises to the mitochondrion. In terms of biological role, plays a role in mitochondrial electron transport and mitochondrial respiration. Through its regulation of the mitochondrial function may play a role in normal postnatal skeletal growth and cartilage homeostasis. The polypeptide is Cellular communication network factor 6 (Homo sapiens (Human)).